The sequence spans 482 residues: Programmed cell death protein 7 (482 aa).

Disordered regions lie at residues 1-136 (MALP…GDAA) and 151-170 (GNPR…GPSL). Residues 13–48 (GPPPPQPPPSAPFGCPPPPLPSPAFPPPLPQRPGPF) are compositionally biased toward pro residues. Over residues 49 to 71 (PGASAPFLQPPLALQPRAPAEAS) the composition is skewed to low complexity. Pro residues-rich tracts occupy residues 82-100 (PVPP…PFPG) and 109-130 (PPPP…PPPD). The segment covering 151-168 (GNPRRPGGLRTPRTPAGP) has biased composition (low complexity). A coiled-coil region spans residues 233 to 408 (EARRRLERVR…LQKREIESKL (176 aa)).

Interacts with RBM40. Component of the U11/U12 snRNPs that are part of the U12-type spliceosome. Highly expressed in testis, thymus and lymph nodes. Detected at low levels in embryonic stem cells.

The protein resides in the nucleus. Functionally, promotes apoptosis when overexpressed. The chain is Programmed cell death protein 7 (Pdcd7) from Mus musculus (Mouse).